The sequence spans 672 residues: Zinc finger protein 271 (672 aa).

Residues 1 to 29 (MEIQFNYESQEHHLLSDGENKTKIGKPAS) are disordered. The segment covering 9-22 (SQEHHLLSDGENKT) has biased composition (basic and acidic residues). The C2H2-type 1; degenerate zinc finger occupies 80–102 (HNCDEYGQSFVWNTGLFRHRKTH). C2H2-type zinc fingers lie at residues 107–129 (YECDKCGKAFSVSSALVLHQRIH), 135–157 (YSCNWCIKSFSRSSDLIKHQRVH), 163–185 (YKCDECGKAFSQSSDLIIHQRIH), 191–213 (YQCSHCSKSFSQRSDLVKHQRIH), 219–241 (YTCNQCNKHFSQSSDVIKHQRIH), 247–269 (YKCDVCAKAFSQSSDLILHQRIH), 275–297 (YPCNQCSKSFSQNSDLIKHRRIH), 303–325 (YKCNECGKAFNQSSVLILHQRIH), 331–353 (YPCDQCSKTFSRLSDLINHQRIH), 359–381 (YPCNQCNKMFSRRSDLVKHHRIH), 387–409 (YECDECGKTFSQSSNLILHQRIH), 415–437 (YPCSDCTKSFSRRSDLVKHQRIH), 443–465 (YACNQCDKSFSQSSDLTKHQRVH), 471–493 (YHCNSCEKAFSQSSDLILHQRIH), 499–521 (YLCTQCSKSFSQNSDLIKHQRIH), 527–549 (YKCSECRKAFSQCSALTLHQRIH), 555–577 (NPCNECGKSFSRHSDLINHQKIH), 583–605 (YKCDACGKAFSTCTDLIEHQKIH), and 611–633 (YRCVQCSRSFSQLSELTIHEEVH).

This sequence belongs to the krueppel C2H2-type zinc-finger protein family.

It is found in the nucleus. Its function is as follows. May be involved in transcriptional regulation. The sequence is that of Zinc finger protein 271 (ZNF271) from Pongo abelii (Sumatran orangutan).